The primary structure comprises 139 residues: MGFSSVVGATVMIIALLVCGAYLYVTMDSYYENVDEAYTTYYSHVHAKLNEKLVITDVKSSTSQTNITIYNNGSVVVEPDKFTILFDGTVVPEENISYYPKLKKYLVPLDSITIVVNWTQPSRICIVSDNGNKYFYSLT.

Residues 1-18 form the signal peptide; that stretch reads MGFSSVVGATVMIIALLV. Cysteine 19 is subject to N-acetylcysteine. A lipid anchor (S-archaeol cysteine) is attached at cysteine 19.

This sequence to M.voltae FlaF.

The protein localises to the archaeal flagellum. The protein resides in the membrane. The chain is Putative flagella-related protein F (flaF) from Methanocaldococcus jannaschii (strain ATCC 43067 / DSM 2661 / JAL-1 / JCM 10045 / NBRC 100440) (Methanococcus jannaschii).